The following is a 127-amino-acid chain: Fluoride-specific ion channel FluC (127 aa).

4 consecutive transmembrane segments (helical) span residues 4-24 (LLLA…LLSM), 35-55 (LGTL…FAWF), 71-91 (TGFC…VFLL), and 103-123 (VFVN…LFSA). Na(+)-binding residues include Gly75 and Thr78.

Belongs to the fluoride channel Fluc/FEX (TC 1.A.43) family.

It localises to the cell inner membrane. The catalysed reaction is fluoride(in) = fluoride(out). With respect to regulation, na(+) is not transported, but it plays an essential structural role and its presence is essential for fluoride channel function. Its function is as follows. Fluoride-specific ion channel. Important for reducing fluoride concentration in the cell, thus reducing its toxicity. The sequence is that of Fluoride-specific ion channel FluC from Shigella flexneri serotype 5b (strain 8401).